Reading from the N-terminus, the 160-residue chain is Transcriptional repressor NrdR (160 aa).

A zinc finger lies at cysteine 3 to cysteine 34. Residues leucine 49–aspartate 139 enclose the ATP-cone domain.

This sequence belongs to the NrdR family. It depends on Zn(2+) as a cofactor.

In terms of biological role, negatively regulates transcription of bacterial ribonucleotide reductase nrd genes and operons by binding to NrdR-boxes. The sequence is that of Transcriptional repressor NrdR from Bartonella henselae (strain ATCC 49882 / DSM 28221 / CCUG 30454 / Houston 1) (Rochalimaea henselae).